An 80-amino-acid polypeptide reads, in one-letter code: RNA-binding protein Hfq (80 aa).

The Sm domain occupies 10 to 69; the sequence is DPFLNTLRREHVPVSIYLVNGIKLQGQIESFDQYVVLLKNTVTQMVYKHAISTVVPARPV.

Belongs to the Hfq family. In terms of assembly, homohexamer.

Functionally, RNA chaperone that binds small regulatory RNA (sRNAs) and mRNAs to facilitate mRNA translational regulation in response to envelope stress, environmental stress and changes in metabolite concentrations. Also binds with high specificity to tRNAs. The polypeptide is RNA-binding protein Hfq (Azoarcus sp. (strain BH72)).